Here is a 284-residue protein sequence, read N- to C-terminus: Four and a half LIM domains protein 5 (284 aa).

The segment at 8–32 (CQYCTASLLGKKYVLKDDSLFCVTC) adopts a C4-type zinc-finger fold. 4 consecutive LIM zinc-binding domains span residues 39–100 (NYCE…ECSS), 101–160 (KCFH…KEFA), 161–220 (HYCN…LYAN), and 223–283 (VACS…MDSD).

Interacts with CREM (via the third LIM domain). Interacts (via second LIM domain) with SPAG8.

It is found in the nucleus. May be involved in the regulation of spermatogenesis. Stimulates CREM transcriptional activity in a phosphorylation-independent manner. The sequence is that of Four and a half LIM domains protein 5 (FHL5) from Macaca fascicularis (Crab-eating macaque).